Here is a 427-residue protein sequence, read N- to C-terminus: Trigger factor (427 aa).

Residues 163 to 248 (GDTVVIDFVG…VNEVKAKELP (86 aa)) form the PPIase FKBP-type domain.

It belongs to the FKBP-type PPIase family. Tig subfamily.

The protein localises to the cytoplasm. The catalysed reaction is [protein]-peptidylproline (omega=180) = [protein]-peptidylproline (omega=0). Functionally, involved in protein export. Acts as a chaperone by maintaining the newly synthesized protein in an open conformation. Functions as a peptidyl-prolyl cis-trans isomerase. The protein is Trigger factor of Lactococcus lactis subsp. cremoris (strain MG1363).